The sequence spans 47 residues: Conotoxin Bu10 (47 aa).

The propeptide occupies 1–22 (DSRGTQLHRALRKATILSVSAR). Intrachain disulfides connect C23/C37, C30/C41, and C36/C46. C46 carries the cysteine amide modification.

It belongs to the conotoxin O1 superfamily. Expressed by the venom duct.

Its subcellular location is the secreted. The protein is Conotoxin Bu10 of Conus bullatus (Bubble cone).